The following is a 235-amino-acid chain: tRNA (guanine-N(1)-)-methyltransferase (235 aa).

Residues Gly114 and 134 to 139 each bind S-adenosyl-L-methionine; that span reads VGDYIL.

It belongs to the RNA methyltransferase TrmD family. In terms of assembly, homodimer.

The protein localises to the cytoplasm. It catalyses the reaction guanosine(37) in tRNA + S-adenosyl-L-methionine = N(1)-methylguanosine(37) in tRNA + S-adenosyl-L-homocysteine + H(+). In terms of biological role, specifically methylates guanosine-37 in various tRNAs. The polypeptide is tRNA (guanine-N(1)-)-methyltransferase (Chelativorans sp. (strain BNC1)).